A 597-amino-acid polypeptide reads, in one-letter code: Aspartate--tRNA ligase (597 aa).

Glutamate 173 contacts L-aspartate. Residues 197-200 (QLFK) form an aspartate region. Arginine 219 serves as a coordination point for L-aspartate. Residues 219–221 (RDE) and glutamine 228 contribute to the ATP site. Residue histidine 449 coordinates L-aspartate. Glutamate 483 serves as a coordination point for ATP. Arginine 490 is an L-aspartate binding site. 535–538 (GLDR) is an ATP binding site.

This sequence belongs to the class-II aminoacyl-tRNA synthetase family. Type 1 subfamily. As to quaternary structure, homodimer.

Its subcellular location is the cytoplasm. The enzyme catalyses tRNA(Asp) + L-aspartate + ATP = L-aspartyl-tRNA(Asp) + AMP + diphosphate. In terms of biological role, catalyzes the attachment of L-aspartate to tRNA(Asp) in a two-step reaction: L-aspartate is first activated by ATP to form Asp-AMP and then transferred to the acceptor end of tRNA(Asp). The polypeptide is Aspartate--tRNA ligase (Shewanella pealeana (strain ATCC 700345 / ANG-SQ1)).